A 418-amino-acid polypeptide reads, in one-letter code: Actin-related protein 3 (418 aa).

Residue Ala-2 is modified to N-acetylalanine.

Belongs to the actin family. ARP3 subfamily. As to quaternary structure, component of the Arp2/3 complex composed of ACTR2/ARP2, ACTR3/ARP3, ARPC1B/p41-ARC, ARPC2/p34-ARC, ARPC3/p21-ARC, ARPC4/p20-ARC and ARPC5/p16-ARC. In terms of tissue distribution, detected in fibroblasts.

It is found in the cytoplasm. The protein localises to the cytoskeleton. It localises to the cell projection. Its subcellular location is the nucleus. ATP-binding component of the Arp2/3 complex, a multiprotein complex that mediates actin polymerization upon stimulation by nucleation-promoting factor (NPF). The Arp2/3 complex mediates the formation of branched actin networks in the cytoplasm, providing the force for cell motility. Seems to contact the pointed end of the daughter actin filament. In addition to its role in the cytoplasmic cytoskeleton, the Arp2/3 complex also promotes actin polymerization in the nucleus, thereby regulating gene transcription and repair of damaged DNA. The Arp2/3 complex promotes homologous recombination (HR) repair in response to DNA damage by promoting nuclear actin polymerization, leading to drive motility of double-strand breaks (DSBs). The polypeptide is Actin-related protein 3 (ACTR3) (Gallus gallus (Chicken)).